Consider the following 968-residue polypeptide: RNA polymerase-associated protein RapA (968 aa).

The Helicase ATP-binding domain occupies 164–334 (DVGRRHAPRV…FARLRLLDPN (171 aa)). 177-184 (DEVGLGKT) serves as a coordination point for ATP. A DEAH box motif is present at residues 280-283 (DEAH). In terms of domain architecture, Helicase C-terminal spans 490–662 (RVEWLMGYLT…YLAAPENTEG (173 aa)).

It belongs to the SNF2/RAD54 helicase family. RapA subfamily. As to quaternary structure, interacts with the RNAP. Has a higher affinity for the core RNAP than for the holoenzyme. Its ATPase activity is stimulated by binding to RNAP.

In terms of biological role, transcription regulator that activates transcription by stimulating RNA polymerase (RNAP) recycling in case of stress conditions such as supercoiled DNA or high salt concentrations. Probably acts by releasing the RNAP, when it is trapped or immobilized on tightly supercoiled DNA. Does not activate transcription on linear DNA. Probably not involved in DNA repair. This is RNA polymerase-associated protein RapA from Cronobacter sakazakii (strain ATCC BAA-894) (Enterobacter sakazakii).